The following is a 341-amino-acid chain: AB hydrolase superfamily protein C1039.03 (341 aa).

It belongs to the AB hydrolase superfamily.

It localises to the cytoplasm. It is found in the nucleus. The sequence is that of AB hydrolase superfamily protein C1039.03 from Schizosaccharomyces pombe (strain 972 / ATCC 24843) (Fission yeast).